We begin with the raw amino-acid sequence, 371 residues long: Glutamate 5-kinase (371 aa).

Lys-14 lines the ATP pocket. The substrate site is built by Ser-52, Asp-139, and Asn-151. 171–172 provides a ligand contact to ATP; the sequence is SD. Residues 275 to 353 form the PUA domain; sequence EGRLHLDSGA…ADLAMELGPS (79 aa).

Belongs to the glutamate 5-kinase family.

The protein localises to the cytoplasm. It catalyses the reaction L-glutamate + ATP = L-glutamyl 5-phosphate + ADP. The protein operates within amino-acid biosynthesis; L-proline biosynthesis; L-glutamate 5-semialdehyde from L-glutamate: step 1/2. Its function is as follows. Catalyzes the transfer of a phosphate group to glutamate to form L-glutamate 5-phosphate. The sequence is that of Glutamate 5-kinase from Frankia casuarinae (strain DSM 45818 / CECT 9043 / HFP020203 / CcI3).